A 312-amino-acid polypeptide reads, in one-letter code: Putative HTH-type transcriptional regulatory protein Ta1363 (312 aa).

In terms of domain architecture, HTH cro/C1-type spans 133–186 (LREMRMKMSLSIGYLSHYLGVSRRSVSLYENGSSATIDVFLKLQEIIKSDLVDH). The H-T-H motif DNA-binding region spans 144–163 (IGYLSHYLGVSRRSVSLYEN).

This Thermoplasma acidophilum (strain ATCC 25905 / DSM 1728 / JCM 9062 / NBRC 15155 / AMRC-C165) protein is Putative HTH-type transcriptional regulatory protein Ta1363.